We begin with the raw amino-acid sequence, 175 residues long: Lithostathine (175 aa).

A signal peptide spans 1–26 (MLPSLGLPRLSWMLLSCLMLLSQIQG). The propeptide occupies 27 to 37 (ENSQKELPSAR). The C-type lectin domain occupies 38-173 (ISCPSGSMAY…NLNLPYVCKF (136 aa)). 3 cysteine pairs are disulfide-bonded: C40/C51, C68/C171, and C146/C163.

In terms of assembly, cleaved to give an A chain and a B chain joined by a disulfide bond. In pancreatic acinar cells.

It localises to the secreted. Functionally, might act as an inhibitor of spontaneous calcium carbonate precipitation. The protein is Lithostathine (PTP) of Bos taurus (Bovine).